The primary structure comprises 217 residues: MTQTSPSRLHSPLDRLLVEAQRALDTVFGNPPAERPNPAADTPDIALDPEQRRHAAGLMRINHVGEVCAQGLYFGQAAVARDAHTQHHLLEAAQEETDHLAWCADRLHELDSRPSLLNPLWYAGSYALGALAGLRGDDWSLGFVVETERQVEAHLDEHLETLPDIDQRSRAILRVMKIDEARHADQAEQAGARQLPAPIPGAMALASKLMKTVAYRL.

Residues Glu-66, Glu-96, His-99, Glu-148, Glu-180, and His-183 each contribute to the Fe cation site.

It belongs to the COQ7 family. The cofactor is Fe cation.

Its subcellular location is the cell membrane. The catalysed reaction is a 5-methoxy-2-methyl-3-(all-trans-polyprenyl)benzene-1,4-diol + AH2 + O2 = a 3-demethylubiquinol + A + H2O. It participates in cofactor biosynthesis; ubiquinone biosynthesis. Catalyzes the hydroxylation of 2-nonaprenyl-3-methyl-6-methoxy-1,4-benzoquinol during ubiquinone biosynthesis. The polypeptide is 3-demethoxyubiquinol 3-hydroxylase (Xanthomonas oryzae pv. oryzae (strain MAFF 311018)).